A 562-amino-acid polypeptide reads, in one-letter code: Potassium-transporting ATPase potassium-binding subunit (562 aa).

12 helical membrane-spanning segments follow: residues 6–26 (FLLI…LGGF), 63–83 (ALAI…LLMA), 132–152 (GLTV…FALI), 175–195 (LYVL…QGVL), 253–273 (FVQM…FGQV), 283–303 (LIWA…YAEL), 327–347 (FGIL…CGAV), 356–376 (ALGG…FGGV), 379–399 (GLYG…LMIG), 416–436 (MTAL…ALAL), 483–503 (LLLA…VLAI), and 526–546 (LFIG…FIPA).

It belongs to the KdpA family. In terms of assembly, the system is composed of three essential subunits: KdpA, KdpB and KdpC.

It is found in the cell inner membrane. Its function is as follows. Part of the high-affinity ATP-driven potassium transport (or Kdp) system, which catalyzes the hydrolysis of ATP coupled with the electrogenic transport of potassium into the cytoplasm. This subunit binds the periplasmic potassium ions and delivers the ions to the membrane domain of KdpB through an intramembrane tunnel. This chain is Potassium-transporting ATPase potassium-binding subunit, found in Yersinia pseudotuberculosis serotype O:1b (strain IP 31758).